The sequence spans 470 residues: Acetyl-CoA decarbonylase/synthase complex subunit gamma 1 (470 aa).

The 4Fe-4S domain maps to 1–60; it reads MKINSPLEAYKYLPQTNCGECGQPTCMAFASTLIDRSGKTTDCPPLIKEKKFAKKLAELD. Residues C18, C21, C26, and C43 each contribute to the [4Fe-4S] cluster site.

In terms of assembly, heterodimer of delta and gamma chains. The ACDS complex is made up of alpha, epsilon, beta, gamma and delta chains with a probable stoichiometry of (alpha(2)epsilon(2))(4)-beta(8)-(gamma(1)delta(1))(8). Corrinoid is required as a cofactor. It depends on [4Fe-4S] cluster as a cofactor.

The catalysed reaction is 5,6,7,8-tetrahydrosarcinapterin + methyl-Co(III)-[corrinoid Fe-S protein] = 5-methyltetrahydrosarcinapterin + Co(I)-[corrinoid Fe-S protein] + H(+). Its pathway is one-carbon metabolism; methanogenesis from acetate. Its function is as follows. Part of a complex that catalyzes the reversible cleavage of acetyl-CoA, allowing growth on acetate as sole source of carbon and energy. This is Acetyl-CoA decarbonylase/synthase complex subunit gamma 1 from Methanosarcina mazei (strain ATCC BAA-159 / DSM 3647 / Goe1 / Go1 / JCM 11833 / OCM 88) (Methanosarcina frisia).